A 397-amino-acid polypeptide reads, in one-letter code: Succinate--CoA ligase [ADP-forming] subunit beta (397 aa).

The region spanning Lys-9–Glu-254 is the ATP-grasp domain. Residues Lys-46, Gly-53–Gly-55, Glu-109, Ala-112, and Glu-117 each bind ATP. Mg(2+) is bound by residues Asn-209 and Asp-223. Residues Asn-274 and Gly-331 to Met-333 each bind substrate.

Belongs to the succinate/malate CoA ligase beta subunit family. As to quaternary structure, heterotetramer of two alpha and two beta subunits. The cofactor is Mg(2+).

The enzyme catalyses succinate + ATP + CoA = succinyl-CoA + ADP + phosphate. It carries out the reaction GTP + succinate + CoA = succinyl-CoA + GDP + phosphate. Its pathway is carbohydrate metabolism; tricarboxylic acid cycle; succinate from succinyl-CoA (ligase route): step 1/1. Its function is as follows. Succinyl-CoA synthetase functions in the citric acid cycle (TCA), coupling the hydrolysis of succinyl-CoA to the synthesis of either ATP or GTP and thus represents the only step of substrate-level phosphorylation in the TCA. The beta subunit provides nucleotide specificity of the enzyme and binds the substrate succinate, while the binding sites for coenzyme A and phosphate are found in the alpha subunit. The chain is Succinate--CoA ligase [ADP-forming] subunit beta from Rhizobium leguminosarum bv. trifolii (strain WSM2304).